The following is an 820-amino-acid chain: Leucine--tRNA ligase (820 aa).

Residues 42 to 52 (PYPSGDLHMGH) carry the 'HIGH' region motif. Residues 576–580 (KMSKS) carry the 'KMSKS' region motif. Position 579 (K579) interacts with ATP.

It belongs to the class-I aminoacyl-tRNA synthetase family.

Its subcellular location is the cytoplasm. It carries out the reaction tRNA(Leu) + L-leucine + ATP = L-leucyl-tRNA(Leu) + AMP + diphosphate. The polypeptide is Leucine--tRNA ligase (Coxiella burnetii (strain RSA 331 / Henzerling II)).